A 1297-amino-acid chain; its full sequence is Phosphoribosylformylglycinamidine synthase (1297 aa).

The interval 304–323 is disordered; the sequence is PFPGAATGSGGEIRDEGATG. ATP contacts are provided by residues 307–318 and Ala678; that span reads GAATGSGGEIRD. Residues Asp679, Glu718, Asn722, and Asp886 each contribute to the Mg(2+) site. Ser888 contacts ATP. The Glutamine amidotransferase type-1 domain occupies 1043 to 1297; it reads RIAILREQGV…LFQNARVALG (255 aa). Residue Cys1137 is the Nucleophile of the active site. Residues His1262 and Glu1264 contribute to the active site.

In the N-terminal section; belongs to the FGAMS family. Monomer.

It is found in the cytoplasm. It catalyses the reaction N(2)-formyl-N(1)-(5-phospho-beta-D-ribosyl)glycinamide + L-glutamine + ATP + H2O = 2-formamido-N(1)-(5-O-phospho-beta-D-ribosyl)acetamidine + L-glutamate + ADP + phosphate + H(+). It participates in purine metabolism; IMP biosynthesis via de novo pathway; 5-amino-1-(5-phospho-D-ribosyl)imidazole from N(2)-formyl-N(1)-(5-phospho-D-ribosyl)glycinamide: step 1/2. Its function is as follows. Phosphoribosylformylglycinamidine synthase involved in the purines biosynthetic pathway. Catalyzes the ATP-dependent conversion of formylglycinamide ribonucleotide (FGAR) and glutamine to yield formylglycinamidine ribonucleotide (FGAM) and glutamate. In Histophilus somni (strain 129Pt) (Haemophilus somnus), this protein is Phosphoribosylformylglycinamidine synthase.